A 198-amino-acid polypeptide reads, in one-letter code: Probable GTP-binding protein EngB (198 aa).

Residues 22–195 (HRNEVAFVGR…IDKLFLEFAT (174 aa)) form the EngB-type G domain. Residues 30 to 37 (GRSNVGKS), 57 to 61 (GKTRL), 75 to 78 (DLPG), 142 to 145 (TKSD), and 174 to 176 (YSS) contribute to the GTP site. 2 residues coordinate Mg(2+): serine 37 and threonine 59.

Belongs to the TRAFAC class TrmE-Era-EngA-EngB-Septin-like GTPase superfamily. EngB GTPase family. It depends on Mg(2+) as a cofactor.

Functionally, necessary for normal cell division and for the maintenance of normal septation. The protein is Probable GTP-binding protein EngB of Clostridium botulinum (strain Eklund 17B / Type B).